A 163-amino-acid polypeptide reads, in one-letter code: Photosystem II extrinsic protein V (163 aa).

An N-terminal signal peptide occupies residues 1-26 (MLKRSSWLAALLGLLTVVSTSTHTYA). Heme c-binding residues include cysteine 63, cysteine 66, histidine 67, and histidine 118.

The protein belongs to the cytochrome c family. PsbV subfamily. As to quaternary structure, PSII is composed of 1 copy each of membrane proteins PsbA, PsbB, PsbC, PsbD, PsbE, PsbF, PsbH, PsbI, PsbJ, PsbK, PsbL, PsbM, PsbT, PsbY, PsbZ, Psb30/Ycf12, at least 3 peripheral proteins of the oxygen-evolving complex and a large number of cofactors. It forms dimeric complexes. The extrinsic subunits in red algae are PsbO (OEC33), PsbQ', cytochrome c-550 and PsbU. Heme c is required as a cofactor.

It localises to the plastid. The protein resides in the chloroplast thylakoid membrane. Functionally, one of the extrinsic, lumenal subunits of photosystem II (PSII). PSII is a light-driven water plastoquinone oxidoreductase, using light energy to abstract electrons from H(2)O, generating a proton gradient subsequently used for ATP formation. The extrinsic proteins stabilize the structure of photosystem II oxygen-evolving complex (OEC), the ion environment of oxygen evolution and protect the OEC against heat-induced inactivation. The sequence is that of Photosystem II extrinsic protein V from Pyropia yezoensis (Susabi-nori).